The following is a 569-amino-acid chain: Acetate/butyrate--CoA ligase AAE7, peroxisomal (569 aa).

Residues 567–569 carry the Microbody targeting signal motif; sequence SRL.

This sequence belongs to the ATP-dependent AMP-binding enzyme family. As to expression, expressed in roots, leaves, stems, flowers and developing seeds.

Its subcellular location is the peroxisome. The enzyme catalyses acetate + ATP + CoA = acetyl-CoA + AMP + diphosphate. It carries out the reaction a medium-chain fatty acid + ATP + CoA = a medium-chain fatty acyl-CoA + AMP + diphosphate. Functionally, peroxisomal acetate/butyrate--CoA ligase that is probably involved in the activation of exogenous acetate for entry into the glyoxylate cycle. May play a role to prevent carbon loss from peroxisomes during lipid mobilization. In vitro, is active with both acetate and butyrate. The chain is Acetate/butyrate--CoA ligase AAE7, peroxisomal (AAE7) from Arabidopsis thaliana (Mouse-ear cress).